The following is a 425-amino-acid chain: Inhibin beta A chain (425 aa).

Positions 1–20 are cleaved as a signal peptide; that stretch reads MPLLWLRGFLLASCWIIVRS. Positions 21–309 are excised as a propeptide; it reads SPTPGSEGHS…EDHPHRRRRR (289 aa). Asn165 is a glycosylation site (N-linked (GlcNAc...) asparagine). Residues 260 to 289 form a disordered region; the sequence is KKRKEEEGEGKKRDGEGGAGGDEEKEQSHR. Over residues 263–275 the composition is skewed to basic and acidic residues; it reads KEEEGEGKKRDGE. Intrachain disulfides connect Cys313–Cys321, Cys320–Cys390, Cys349–Cys422, and Cys353–Cys424.

This sequence belongs to the TGF-beta family. As to quaternary structure, dimeric, linked by one or more disulfide bonds. Inhibin A is a dimer of alpha/INHA and beta-A/INHBA. Activin A is a homodimer of beta-A/INHBA. Activin AB is a dimer of beta-A/INHBA and beta-B/INHBB. Interacts with FST and FSTL3; these interactions prevent activin A interaction to its type II receptor. Activin A interacts with ACVR2A. Activin A interacts with BMPR2. Inhibin A interacts with ACVR1; this interaction creates a non-signaling complex (NSC) that inhibits ACVR1-mediated BMP signaling. Inhibin A interacts with ACVR2A.

The protein localises to the secreted. Functionally, inhibins/activins are involved in regulating a number of diverse functions such as hypothalamic and pituitary hormone secretion, gonadal hormone secretion, germ cell development and maturation, erythroid differentiation, insulin secretion, nerve cell survival, embryonic axial development or bone growth, depending on their subunit composition. Activin A is a homodimer of INHBA that plays a role in several essential biological processes including embryonic development, stem cell maintenance and differentiation, haematopoiesis, cell proliferation and tissue fibrosis. Signals through type I (such as ACVR1B or ACVR1C) and type II receptors (such as ACVR2A, ACVR2B or BMPR2) which, upon ligand binding, phosphorylate SMAD2 and SMAD3 intracellular signaling mediators that form a complex with SMAD4, translocate to the nucleus and modulate gene expression. Can also activate alternative non-canonical intracellular signaling pathways including the p38 MAPK, extracellular signal-regulated kinases 1/2 (ERK1/2) and c-Jun N-terminal kinases (JNKs) to modulate cell migration and differentiation. Alternatively, promotes osteoblastic differentiation via ACVRL1-SMAD1/5/9 pathway. In addition, can engage the type I receptor ACVR1 to form an ACVR1-activin A-type II receptor non-signaling complex (NSC) that renders receptors unavailable for engagement with BMPs, hence resulting in an apparent inhibition of ACVR1-mediated BMP signaling. In terms of biological role, inhibin A is a dimer of alpha/INHA and beta-A/INHBA that functions as a feedback regulator in the hypothalamic-pituitary-gonadal (HPG) axis. Inhibits the secretion of FSH from the anterior pituitary gland by acting on pituitary gonadotrope cells. Antagonizes activin A by binding to the proteoglycan, betaglycan, and forming a stable complex with and, thereby, sequestering type II activin receptors while excluding type I receptor. This chain is Inhibin beta A chain (INHBA), found in Ovis aries (Sheep).